We begin with the raw amino-acid sequence, 451 residues long: Mannan endo-1,6-alpha-mannosidase DFG5 (451 aa).

A signal peptide spans 1 to 21 (MVSLQQLTISILLLFTASVQS). N-linked (GlcNAc...) asparagine glycans are attached at residues Asn86, Asn111, Asn135, Asn203, Asn243, Asn268, and Asn402. Residue Ala429 is the site of GPI-anchor amidated alanine attachment. Residues 430–451 (GAGVLTAIVLAVILGGAIWMIF) constitute a propeptide, removed in mature form.

The protein belongs to the glycosyl hydrolase 76 family. Post-translationally, the GPI-anchor is attached to the protein in the endoplasmic reticulum and serves to target the protein to the cell surface. There, the glucosamine-inositol phospholipid moiety is cleaved off and the GPI-modified mannoprotein is covalently attached via its lipidless GPI glycan remnant to the 1,6-beta-glucan of the outer cell wall layer. N-mannosylated.

Its subcellular location is the secreted. The protein resides in the cell wall. It localises to the cell membrane. It carries out the reaction Random hydrolysis of (1-&gt;6)-alpha-D-mannosidic linkages in unbranched (1-&gt;6)-mannans.. In terms of biological role, required for normal synthesis of the cell wall and alkaline pH-induced hypha formation. This is Mannan endo-1,6-alpha-mannosidase DFG5 (DFG5) from Candida albicans (strain SC5314 / ATCC MYA-2876) (Yeast).